Here is a 511-residue protein sequence, read N- to C-terminus: ATP synthase subunit alpha (511 aa).

169-176 (GDRQTGKT) provides a ligand contact to ATP.

The protein belongs to the ATPase alpha/beta chains family. As to quaternary structure, F-type ATPases have 2 components, CF(1) - the catalytic core - and CF(0) - the membrane proton channel. CF(1) has five subunits: alpha(3), beta(3), gamma(1), delta(1), epsilon(1). CF(0) has three main subunits: a(1), b(2) and c(9-12). The alpha and beta chains form an alternating ring which encloses part of the gamma chain. CF(1) is attached to CF(0) by a central stalk formed by the gamma and epsilon chains, while a peripheral stalk is formed by the delta and b chains.

Its subcellular location is the cell inner membrane. It carries out the reaction ATP + H2O + 4 H(+)(in) = ADP + phosphate + 5 H(+)(out). In terms of biological role, produces ATP from ADP in the presence of a proton gradient across the membrane. The alpha chain is a regulatory subunit. This chain is ATP synthase subunit alpha, found in Bartonella quintana (strain Toulouse) (Rochalimaea quintana).